Consider the following 186-residue polypeptide: TATA-box-binding protein B (186 aa).

Repeat copies occupy residues 10-86 (IENV…FGDI) and 101-179 (VQNI…QDRL).

The protein belongs to the TBP family.

Functionally, general factor that plays a role in the activation of archaeal genes transcribed by RNA polymerase. Binds specifically to the TATA box promoter element which lies close to the position of transcription initiation. In Halobacterium salinarum (strain ATCC 700922 / JCM 11081 / NRC-1) (Halobacterium halobium), this protein is TATA-box-binding protein B (tbpB1).